The sequence spans 416 residues: Calreticulin (416 aa).

A signal peptide spans 1–17; that stretch reads MLLSVPLLLGLLGLAAA. The N-domain stretch occupies residues 18 to 197; that stretch reads DPAIYFKEQF…NSQVESGSLE (180 aa). Gln26 lines the Ca(2+) pocket. Residue Lys48 is modified to N6-acetyllysine. Ca(2+)-binding residues include Lys62 and Lys64. Lys64 carries the N6-(2-hydroxyisobutyryl)lysine modification. A disulfide bond links Cys105 and Cys137. An alpha-D-glucoside is bound by residues Tyr109, Lys111, Tyr128, and Asp135. Lys159 is modified (N6-acetyllysine). A 1-1 repeat occupies 191 to 202; sequence VESGSLEDDWDF. Residues 191–255 form a 4 X approximate repeats region; it reads VESGSLEDDW…DAKKPEDWDE (65 aa). Residues 193 to 277 are disordered; that stretch reads SGSLEDDWDF…NPEYKGEWKP (85 aa). Residues 198 to 308 form a P-domain region; sequence DDWDFLPPKK…YSPDANIYAY (111 aa). A compositionally biased stretch (basic and acidic residues) spans 207–251; the sequence is KIKDPDAAKPEDWDERAKIDDPTDSKPEDWDKPEHIPDPDAKKPE. Lys209 is subject to N6-acetyllysine. 6 consecutive repeat copies span residues 210-221, 227-238, 244-255, 259-269, 273-283, and 287-297. The tract at residues 237–270 is interaction with PPIB; that stretch reads DKPEHIPDPDAKKPEDWDEEMDGEWEPPVIQNPE. Over residues 252-261 the composition is skewed to acidic residues; it reads DWDEEMDGEW. Residues 259–297 form a 3 X approximate repeats region; the sequence is GEWEPPVIQNPEYKGEWKPRQIDNPDYKGTWIHPEIDNP. Positions 309 to 416 are C-domain; it reads DSFAVLGLDL…DATGQAKDEL (108 aa). Asp317 contributes to the an alpha-D-glucoside binding site. Asp328 contributes to the Ca(2+) binding site. The disordered stretch occupies residues 350–416; it reads TKAAEKQMKD…DATGQAKDEL (67 aa). A compositionally biased stretch (basic and acidic residues) spans 352-379; the sequence is AAEKQMKDKQDEEQRLKEEEEDKKRKEE. The span at 380–408 shows a compositional bias: acidic residues; it reads EEAEDKEDEDDRDEDEDEEDEKEEDEEDA. The Prevents secretion from ER signature appears at 413–416; it reads KDEL.

Belongs to the calreticulin family. As to quaternary structure, monomer. Component of an EIF2 complex at least composed of CELF1/CUGBP1, CALR, CALR3, EIF2S1, EIF2S2, HSP90B1 and HSPA5. Interacts with GABARAP, NR3C1 and TRIM21. Interacts with PPIB and SPACA9. Interacts (via P-domain) with PDIA5. Interacts with PDIA3/ERp57. Interacts with CLCC1. Predentin and odontoblast.

Its subcellular location is the endoplasmic reticulum lumen. The protein localises to the cytoplasm. It is found in the cytosol. The protein resides in the secreted. It localises to the extracellular space. Its subcellular location is the extracellular matrix. The protein localises to the cell surface. It is found in the sarcoplasmic reticulum lumen. The protein resides in the cytoplasmic vesicle. It localises to the secretory vesicle. Its subcellular location is the cortical granule. The protein localises to the cytolytic granule. In terms of biological role, calcium-binding chaperone that promotes folding, oligomeric assembly and quality control in the endoplasmic reticulum (ER) via the calreticulin/calnexin cycle. This lectin interacts transiently with almost all of the monoglucosylated glycoproteins that are synthesized in the ER. Interacts with the DNA-binding domain of NR3C1 and mediates its nuclear export. Involved in maternal gene expression regulation. May participate in oocyte maturation via the regulation of calcium homeostasis. Present in the cortical granules of non-activated oocytes, is exocytosed during the cortical reaction in response to oocyte activation and might participate in the block to polyspermy. The polypeptide is Calreticulin (Calr) (Rattus norvegicus (Rat)).